Consider the following 58-residue polypeptide: Sodium/potassium-transporting ATPase subunit gamma (58 aa).

Residues 20-39 (NGGLIFAALAFIVGLVIILS) form a helical membrane-spanning segment.

It belongs to the FXYD family. As to quaternary structure, regulatory subunit of the sodium/potassium-transporting ATPase which is composed of a catalytic alpha subunit, an auxiliary non-catalytic beta subunit and an additional regulatory subunit. As to expression, highest levels expressed in the kidney and spleen. Restricted to the basolateral membrane in renal epithelial cells and varies in its level of expression along the nephron.

The protein resides in the membrane. Its function is as follows. May be involved in forming the receptor site for cardiac glycoside binding or may modulate the transport function of the sodium ATPase. This Bos taurus (Bovine) protein is Sodium/potassium-transporting ATPase subunit gamma (FXYD2).